The primary structure comprises 66 residues: Large ribosomal subunit protein uL29 (66 aa).

Belongs to the universal ribosomal protein uL29 family.

This chain is Large ribosomal subunit protein uL29, found in Lachnospira eligens (strain ATCC 27750 / DSM 3376 / VPI C15-48 / C15-B4) (Eubacterium eligens).